Here is a 581-residue protein sequence, read N- to C-terminus: Protein FAM83D (581 aa).

The tract at residues 1-297 (MALRYDGLDE…LYAQSKPISS (297 aa)) is DUF1669. Residues 75–101 (PGEEGAAAGAEDSFGSSHDCSSGTYFP) form a disordered region. Polar residues predominate over residues 88–98 (FGSSHDCSSGT). Phosphoserine is present on S296. Positions 338 to 581 (TPRKVELGGE…REIMLYPSYQ (244 aa)) are required for interaction with KIF22 and function in chromosome congression. 2 disordered regions span residues 366–401 (EDYFSSRKDRLEGRRVTDAATQTEPGETPAVSMSDV) and 426–503 (QTVV…GPPK). Over residues 369–382 (FSSRKDRLEGRRVT) the composition is skewed to basic and acidic residues. A compositionally biased stretch (low complexity) spans 426–438 (QTVVPTTSATTQT). Phosphoserine is present on S456. The span at 462 to 488 (SVSRSSSLRSSSSLSSQGSVASSIGSQ) shows a compositional bias: low complexity. At T507 the chain carries Phosphothreonine.

Belongs to the FAM83 family. In terms of assembly, interacts with FBXW7; promotes FBXW7 degradation. May interact with RAF1. Interacts with KIF22; recruits KIF22 to mitotic spindle microtubules. Interacts (via C-terminus) with DYNLL1. Interacts with HMMR. Directly interacts (via DUF1669) with CSNK1A1 and CSNK1A1L. In terms of processing, phosphorylated during mitosis.

It is found in the cytoplasm. It localises to the cytoskeleton. Its subcellular location is the spindle. The protein localises to the spindle pole. Functionally, through the degradation of FBXW7, may act indirectly on the expression and downstream signaling of MTOR, JUN and MYC. May play also a role in cell proliferation through activation of the ERK1/ERK2 signaling cascade. May also be important for proper chromosome congression and alignment during mitosis through its interaction with KIF22. This chain is Protein FAM83D, found in Bos taurus (Bovine).